The chain runs to 201 residues: Adenylyl-sulfate kinase (201 aa).

35–42 (GLSGSGKS) provides a ligand contact to ATP. Serine 109 acts as the Phosphoserine intermediate in catalysis.

Belongs to the APS kinase family.

It carries out the reaction adenosine 5'-phosphosulfate + ATP = 3'-phosphoadenylyl sulfate + ADP + H(+). Its pathway is sulfur metabolism; hydrogen sulfide biosynthesis; sulfite from sulfate: step 2/3. Catalyzes the synthesis of activated sulfate. This Erwinia tasmaniensis (strain DSM 17950 / CFBP 7177 / CIP 109463 / NCPPB 4357 / Et1/99) protein is Adenylyl-sulfate kinase.